The sequence spans 161 residues: Globin CTT-VIIB-6 (161 aa).

Positions Met-1–Ala-16 are cleaved as a signal peptide. Residues Pro-18–Leu-161 enclose the Globin domain. Residues His-76 and His-111 each contribute to the heme b site.

This sequence belongs to the globin family. In terms of assembly, homodimer.

The protein is Globin CTT-VIIB-6 (CTT-7B6) of Chironomus thummi thummi (Midge).